The following is an 80-amino-acid chain: MQYKTKTFLVIFLAYLVVTNEAEAFWSFLVKAASKILPSLIGGGDDNKSSSKRKREIEDFFDPYQRELDLELERLLSQLQ.

Positions 1-24 are cleaved as a signal peptide; it reads MQYKTKTFLVIFLAYLVVTNEAEA. A propeptide spanning residues 56–80 is cleaved from the precursor; sequence EIEDFFDPYQRELDLELERLLSQLQ.

Belongs to the non-disulfide-bridged peptide (NDBP) superfamily. Medium-length antimicrobial peptide (group 3) family. Expressed by the venom gland.

The protein resides in the secreted. It is found in the target cell membrane. Antimicrobial peptide. Has antifungal activity against all strains tested (MIC=12.5-200 uM). May act by disrupting the integrity of the bacterial cell membrane. This Opisthacanthus cayaporum (South American scorpion) protein is Probable antimicrobial peptide clone Con10.